A 62-amino-acid polypeptide reads, in one-letter code: Phycobilisome degradation protein NblA homolog 1 (62 aa).

To Synechococcus PCC 7942 NblA and some, to chloroplast ycf18.

This chain is Phycobilisome degradation protein NblA homolog 1, found in Synechocystis sp. (strain ATCC 27184 / PCC 6803 / Kazusa).